The sequence spans 288 residues: Eukaryotic translation initiation factor 3 subunit F-2 (288 aa).

In terms of domain architecture, MPN spans 12–149 (VLLHPLVLFQ…TRIFCAVATG (138 aa)).

The protein belongs to the eIF-3 subunit F family. As to quaternary structure, component of the eukaryotic translation initiation factor 3 (eIF-3) complex. The eIF-3 complex interacts with pix.

The protein localises to the cytoplasm. In terms of biological role, component of the eukaryotic translation initiation factor 3 (eIF-3) complex, which is involved in protein synthesis of a specialized repertoire of mRNAs and, together with other initiation factors, stimulates binding of mRNA and methionyl-tRNAi to the 40S ribosome. The eIF-3 complex specifically targets and initiates translation of a subset of mRNAs involved in cell proliferation. In Drosophila pseudoobscura pseudoobscura (Fruit fly), this protein is Eukaryotic translation initiation factor 3 subunit F-2.